We begin with the raw amino-acid sequence, 336 residues long: Holliday junction branch migration complex subunit RuvB (336 aa).

Residues 4 to 184 form a large ATPase domain (RuvB-L) region; that stretch reads ADRLISATGV…FGIVQRLEFY (181 aa). ATP-binding positions include Ile23, Arg24, Gly65, Lys68, Thr69, Thr70, 131 to 133, Arg174, Tyr184, and Arg221; that span reads EDY. Thr69 is a Mg(2+) binding site. The segment at 185-255 is small ATPAse domain (RuvB-S); the sequence is NVKDLTDIVS…IAARAMDMLD (71 aa). Residues 258–336 are head domain (RuvB-H); sequence NEGFDFMDRK…HFGLQRPDER (79 aa). DNA-binding residues include Arg313 and Arg318.

Belongs to the RuvB family. In terms of assembly, homohexamer. Forms an RuvA(8)-RuvB(12)-Holliday junction (HJ) complex. HJ DNA is sandwiched between 2 RuvA tetramers; dsDNA enters through RuvA and exits via RuvB. An RuvB hexamer assembles on each DNA strand where it exits the tetramer. Each RuvB hexamer is contacted by two RuvA subunits (via domain III) on 2 adjacent RuvB subunits; this complex drives branch migration. In the full resolvosome a probable DNA-RuvA(4)-RuvB(12)-RuvC(2) complex forms which resolves the HJ.

The protein resides in the cytoplasm. The enzyme catalyses ATP + H2O = ADP + phosphate + H(+). The RuvA-RuvB-RuvC complex processes Holliday junction (HJ) DNA during genetic recombination and DNA repair, while the RuvA-RuvB complex plays an important role in the rescue of blocked DNA replication forks via replication fork reversal (RFR). RuvA specifically binds to HJ cruciform DNA, conferring on it an open structure. The RuvB hexamer acts as an ATP-dependent pump, pulling dsDNA into and through the RuvAB complex. RuvB forms 2 homohexamers on either side of HJ DNA bound by 1 or 2 RuvA tetramers; 4 subunits per hexamer contact DNA at a time. Coordinated motions by a converter formed by DNA-disengaged RuvB subunits stimulates ATP hydrolysis and nucleotide exchange. Immobilization of the converter enables RuvB to convert the ATP-contained energy into a lever motion, pulling 2 nucleotides of DNA out of the RuvA tetramer per ATP hydrolyzed, thus driving DNA branch migration. The RuvB motors rotate together with the DNA substrate, which together with the progressing nucleotide cycle form the mechanistic basis for DNA recombination by continuous HJ branch migration. Branch migration allows RuvC to scan DNA until it finds its consensus sequence, where it cleaves and resolves cruciform DNA. This Aeromonas salmonicida (strain A449) protein is Holliday junction branch migration complex subunit RuvB.